The sequence spans 368 residues: Phosphoserine aminotransferase (368 aa).

Arg-44 provides a ligand contact to L-glutamate. Residues Ala-78–Thr-79, Trp-104, Thr-157, Asp-179, and Gln-202 contribute to the pyridoxal 5'-phosphate site. N6-(pyridoxal phosphate)lysine is present on Lys-203. Residue Asn-244–Thr-245 coordinates pyridoxal 5'-phosphate.

Belongs to the class-V pyridoxal-phosphate-dependent aminotransferase family. SerC subfamily. Homodimer. Pyridoxal 5'-phosphate is required as a cofactor.

It localises to the cytoplasm. The catalysed reaction is O-phospho-L-serine + 2-oxoglutarate = 3-phosphooxypyruvate + L-glutamate. The enzyme catalyses 4-(phosphooxy)-L-threonine + 2-oxoglutarate = (R)-3-hydroxy-2-oxo-4-phosphooxybutanoate + L-glutamate. Its pathway is amino-acid biosynthesis; L-serine biosynthesis; L-serine from 3-phospho-D-glycerate: step 2/3. It functions in the pathway cofactor biosynthesis; pyridoxine 5'-phosphate biosynthesis; pyridoxine 5'-phosphate from D-erythrose 4-phosphate: step 3/5. In terms of biological role, catalyzes the reversible conversion of 3-phosphohydroxypyruvate to phosphoserine and of 3-hydroxy-2-oxo-4-phosphonooxybutanoate to phosphohydroxythreonine. This is Phosphoserine aminotransferase from Neisseria meningitidis serogroup B (strain ATCC BAA-335 / MC58).